A 224-amino-acid chain; its full sequence is Thymidylate kinase (224 aa).

ATP is bound at residue 13–20; the sequence is GGEGAGKS.

Belongs to the thymidylate kinase family.

It carries out the reaction dTMP + ATP = dTDP + ADP. Its function is as follows. Phosphorylation of dTMP to form dTDP in both de novo and salvage pathways of dTTP synthesis. In Agrobacterium fabrum (strain C58 / ATCC 33970) (Agrobacterium tumefaciens (strain C58)), this protein is Thymidylate kinase.